Here is a 1005-residue protein sequence, read N- to C-terminus: uncharacterized protein (1005 aa).

The first 24 residues, 1–24 (MKFQRKYWGLLSTLGVSSAVALSA), serve as a signal peptide directing secretion. The N-palmitoyl cysteine moiety is linked to residue Cys25. Cys25 is lipidated: S-diacylglycerol cysteine. Disordered regions lie at residues 105-165 (KKDK…EEKF) and 786-825 (TQKI…WDDV). Low complexity-rich tracts occupy residues 110-131 (TSSQ…TSTS) and 145-156 (QSSSNGQNNQQS). Residues 786–801 (TQKIDQQNTASTTSDV) show a composition bias toward polar residues.

It is found in the cell membrane. This is an uncharacterized protein from Mycoplasma pneumoniae (strain ATCC 29342 / M129 / Subtype 1) (Mycoplasmoides pneumoniae).